We begin with the raw amino-acid sequence, 67 residues long: uncharacterized protein (67 aa).

This is an uncharacterized protein from Haloarcula hispanica (His1V).